Here is a 208-residue protein sequence, read N- to C-terminus: Mitochondrial import inner membrane translocase subunit Tim23 (208 aa).

The next 3 membrane-spanning stretches (helical) occupy residues 73-93 (FELA…FGTL), 125-145 (ASWA…GVAI), and 173-193 (GLKG…LYAL).

Belongs to the Tim17/Tim22/Tim23 family. In terms of assembly, component of the TIM23 complex at least composed of timm23, timm17 and timm50. The complex interacts with the timm44 component of the PAM complex.

It localises to the mitochondrion inner membrane. In terms of biological role, essential component of the TIM23 complex, a complex that mediates the translocation of transit peptide-containing proteins across the mitochondrial inner membrane. Plays an essential role in early embryonic development. The sequence is that of Mitochondrial import inner membrane translocase subunit Tim23 (timm23) from Danio rerio (Zebrafish).